The primary structure comprises 468 residues: Mothers against decapentaplegic homolog 2 (468 aa).

The MH1 domain occupies 10 to 177; it reads PVVKRLLGWK…YQRVETPVLP (168 aa). The Zn(2+) site is built by Cys-75, Cys-150, Cys-162, and His-167. The disordered stretch occupies residues 224–254; that stretch reads PGYISEDGEASDQQMNQSMDTGSPAELSPST. Residues 234–244 are compositionally biased toward polar residues; it reads SDQQMNQSMDT. An MH2 domain is found at 275–468; it reads WCSIAYYELN…SPSVRCSSMS (194 aa).

Belongs to the dwarfin/SMAD family.

The protein localises to the cytoplasm. The protein resides in the nucleus. Promotes differentiation of dorsal tissues. May be involved in the mediation of Ndr2 signaling during mesoderm and axis formation during embryogenesis. The protein is Mothers against decapentaplegic homolog 2 (smad2) of Danio rerio (Zebrafish).